The primary structure comprises 393 residues: 5-amino-6-(D-ribitylamino)uracil--L-tyrosine 4-hydroxyphenyl transferase (393 aa).

A Radical SAM core domain is found at 71–318; the sequence is VTYVINRNIN…TAVSRIFLGN (248 aa). [4Fe-4S] cluster is bound by residues Cys85, Cys89, and Cys92.

It belongs to the radical SAM superfamily. CofH family. Consists of two subunits, CofG and CofH. [4Fe-4S] cluster is required as a cofactor.

It catalyses the reaction 5-amino-6-(D-ribitylamino)uracil + L-tyrosine + S-adenosyl-L-methionine = 5-amino-5-(4-hydroxybenzyl)-6-(D-ribitylimino)-5,6-dihydrouracil + 2-iminoacetate + 5'-deoxyadenosine + L-methionine + H(+). The protein operates within cofactor biosynthesis; coenzyme F0 biosynthesis. Catalyzes the radical-mediated synthesis of 5-amino-5-(4-hydroxybenzyl)-6-(D-ribitylimino)-5,6-dihydrouracil from 5-amino-6-(D-ribitylamino)uracil and L-tyrosine. This Trichodesmium erythraeum (strain IMS101) protein is 5-amino-6-(D-ribitylamino)uracil--L-tyrosine 4-hydroxyphenyl transferase.